The following is a 440-amino-acid chain: WAS/WASL-interacting protein family member 2 (440 aa).

Over residues 1–18 (MPIPPPPPPPPGPPPPPT) the composition is skewed to pro residues. A disordered region spans residues 1 to 38 (MPIPPPPPPPPGPPPPPTFNQANTEQPKLSRDEQRNRG). Residues 36–53 (NRGALLQDICKGTKLKKV) enclose the WH2 domain. At arginine 37 the chain carries Asymmetric dimethylarginine. Residues 49–52 (KLKK) form a binds actin region. Disordered regions lie at residues 56–386 (VNDR…RDSI) and 419–440 (RVYPSKTNRAARGAPPLPPILR). Residues 116–132 (PSSRAAAPRPPGSAASG) show a composition bias toward low complexity. Pro residues-rich tracts occupy residues 176-193 (APPPPPPGRRANAPPTPL), 225-236 (PAPPPVKPPPSP), 249-262 (APPPPPYRQPPGVP), and 356-378 (RGKPPPPPSRTPAGPPPPPPPPL).

It belongs to the verprolin family. Interacts with WASL and WASP, and this interaction results in cytoplasmic relocation of these two proteins along actin filaments. Interacts with NCK2 resulting in the localization to sites of focal adhesions.

Its subcellular location is the cytoplasm. The protein resides in the cytoskeleton. Plays an active role in the formation of cell surface protrusions downstream of activated PDGFB receptors. Plays an important role in actin-microspike formation through cooperation with WASL. May cooperate with WASP and WASL to induce mobilization and reorganization of the actin filament system. The polypeptide is WAS/WASL-interacting protein family member 2 (Wipf2) (Mus musculus (Mouse)).